The following is a 165-amino-acid chain: MSSVFSGDETAPFFGFLGAAAALVFSCMGAAYGTAKSGVGVASMGVMRPELVMKSIVPVVMAGVLGIYGLIIAVIISTGINPKAKPYFLFDGYAHLSSGLACGLAGLAAGMAIGIVGDAGVRANAQQPKLFVGMILILIFAEALALYGLIVGIILSSRAGQSRAD.

Residues 1–10 (MSSVFSGDET) lie on the Lumenal side of the membrane. Residues 11 to 33 (APFFGFLGAAAALVFSCMGAAYG) form a helical membrane-spanning segment. Residues 34 to 55 (TAKSGVGVASMGVMRPELVMKS) lie on the Cytoplasmic side of the membrane. A helical membrane pass occupies residues 56-76 (IVPVVMAGVLGIYGLIIAVII). The Lumenal portion of the chain corresponds to 77–95 (STGINPKAKPYFLFDGYAH). Residues 96–117 (LSSGLACGLAGLAAGMAIGIVG) traverse the membrane as a helical segment. Residues 118–129 (DAGVRANAQQPK) lie on the Cytoplasmic side of the membrane. A helical membrane pass occupies residues 130 to 155 (LFVGMILILIFAEALALYGLIVGIIL). Topologically, residues 156 to 165 (SSRAGQSRAD) are lumenal.

The protein belongs to the V-ATPase proteolipid subunit family. As to quaternary structure, V-ATPase is a heteromultimeric enzyme composed of a peripheral catalytic V1 complex (main components: subunits A, B, C, D, E, and F) attached to an integral membrane V0 proton pore complex (main component: the proteolipid protein; which is present as a hexamer that forms the proton-conducting pore).

The protein localises to the vacuole membrane. Proton-conducting pore forming subunit of the membrane integral V0 complex of vacuolar ATPase. V-ATPase is responsible for acidifying a variety of intracellular compartments in eukaryotic cells. This is V-type proton ATPase 16 kDa proteolipid subunit (VATP-P1) from Avena sativa (Oat).